The primary structure comprises 245 residues: Probable transcriptional regulatory protein CPR_1922 (245 aa).

The protein belongs to the TACO1 family.

It is found in the cytoplasm. The polypeptide is Probable transcriptional regulatory protein CPR_1922 (Clostridium perfringens (strain SM101 / Type A)).